Here is a 431-residue protein sequence, read N- to C-terminus: E3 ubiquitin-protein ligase RNF128 (431 aa).

The first 38 residues, 1–38 (MGQLPGAGVFCRGGCGFSRLLAWCFLLVLSPQTPGSRG), serve as a signal peptide directing secretion. Asn-48, Asn-59, and Asn-101 each carry an N-linked (GlcNAc...) asparagine glycan. One can recognise a PA domain in the interval 75-186 (SPLEPVAGVL…LKGTKILQSI (112 aa)). Residues 211 to 231 (IFFVSVSFFIITAATVGYFIF) traverse the membrane as a helical segment. The RING-type; atypical zinc-finger motif lies at 280 to 321 (CAVCIELYKPNDLVRILTCNHVFHKTCVDPWLLEHRTCPMCK). The span at 345-354 (VSNETSSNAS) shows a compositional bias: polar residues. Positions 345–431 (VSNETSSNAS…QETTVREIKS (87 aa)) are disordered.

Auto-ubiquitinated. Controls the development of T-cell clonal anergy by ubiquitination.

It is found in the cytoplasm. The protein localises to the endomembrane system. The protein resides in the cytoskeleton. It localises to the perinuclear region. The catalysed reaction is S-ubiquitinyl-[E2 ubiquitin-conjugating enzyme]-L-cysteine + [acceptor protein]-L-lysine = [E2 ubiquitin-conjugating enzyme]-L-cysteine + N(6)-ubiquitinyl-[acceptor protein]-L-lysine.. Its pathway is protein modification; protein ubiquitination. Its function is as follows. E3 ubiquitin-protein ligase that catalyzes 'Lys-27', 'Lys-48'- or 'Lys-63'-linked polyubiquitin chains formation and plays a role in different biological processes such as modulation of immune response, cytoskeletal dynamics or protein homeostasis. Inhibits IL2 and IL4 transcription, thereby playing an important role in the induction of the anergic phenotype, a long-term stable state of T-lymphocyte unresponsiveness to antigenic stimulation associated with the blockade of interleukin production. Ubiquitinates ARPC5 with 'Lys-48' linkages and COR1A with 'Lys-63' linkages leading to their degradation, down-regulation of these cytoskeletal components results in impaired lamellipodium formation and reduced accumulation of F-actin at the immunological synapse. Functions in the patterning of the dorsal ectoderm; sensitizes ectoderm to respond to neural-inducing signals. Plays a positive role in innate immune response by promoting 'Lys-63'-linked ubiquitination of TBK1 after RNA- or DNA-virus infection. Regulates alveolar macrophage activation and neutrophil infiltration by interacting with TLR4, targeting it for degradation, and inhibiting NF-kappa-B activation, hence decreasing pro-inflammatory cytokines. Negatively regulates the IL-3/STAT5 signaling pathway by facilitating 'Lys-27'-linked polyubiquitination of IL3RA leading to its degradation via lysosomal pathway. Directly regulates the N-glycosylation process in the endoplasmic reticulum by targeting the glycosyl-transferase RPN1 for ubiquitination and degradation. Other substrates targeted for degradation by RNF128 include transmembrane proteins CD40L, CD83 or the tetraspanin CD151. The polypeptide is E3 ubiquitin-protein ligase RNF128 (RNF128) (Bos taurus (Bovine)).